A 1372-amino-acid polypeptide reads, in one-letter code: DNA-directed RNA polymerase subunit beta (1372 aa).

The protein belongs to the RNA polymerase beta chain family. The RNAP catalytic core consists of 2 alpha, 1 beta, 1 beta' and 1 omega subunit. When a sigma factor is associated with the core the holoenzyme is formed, which can initiate transcription.

It catalyses the reaction RNA(n) + a ribonucleoside 5'-triphosphate = RNA(n+1) + diphosphate. DNA-dependent RNA polymerase catalyzes the transcription of DNA into RNA using the four ribonucleoside triphosphates as substrates. The protein is DNA-directed RNA polymerase subunit beta of Bradyrhizobium sp. (strain ORS 278).